The following is a 296-amino-acid chain: GTPase Era (296 aa).

Residues 7–174 (KAGYISIVGR…TEVIRHYLPE (168 aa)) enclose the Era-type G domain. Residues 15–22 (GRPNVGKS) form a G1 region. Residue 15–22 (GRPNVGKS) coordinates GTP. Residues 41–45 (QTTRH) are G2. Residues 62 to 65 (DTPG) form a G3 region. GTP is bound by residues 62-66 (DTPGF) and 123-126 (NKID). The G4 stretch occupies residues 123–126 (NKID). Positions 153 to 155 (VSA) are G5. Residues 205–281 (IGEEVPYSVS…YLEIWVKVKS (77 aa)) form the KH type-2 domain.

This sequence belongs to the TRAFAC class TrmE-Era-EngA-EngB-Septin-like GTPase superfamily. Era GTPase family. As to quaternary structure, monomer.

The protein localises to the cytoplasm. The protein resides in the cell inner membrane. Functionally, an essential GTPase that binds both GDP and GTP, with rapid nucleotide exchange. Plays a role in 16S rRNA processing and 30S ribosomal subunit biogenesis and possibly also in cell cycle regulation and energy metabolism. This is GTPase Era from Nitrosomonas eutropha (strain DSM 101675 / C91 / Nm57).